Consider the following 208-residue polypeptide: MKIVEVKHPLVKHKLGLMRENDISTKRFRELASEVGSLLTYEATADLATEKVTIDGWCGPVEVDQIKGKKITVVPILRAGLGMMDGVLENVPSARISVVGIYRDEETLEPVPYFQKLVSNIEERMALVVDPMLATGGSMIATIDLLKKAGCHSIKVLVLVAAPEGIAALEKAHPDVELYTASIDKGLNEQGYIMPGLGDAGDKIFGTK.

Residues arginine 78, arginine 103, and 130 to 138 each bind 5-phospho-alpha-D-ribose 1-diphosphate; that span reads DPMLATGGS. Residues isoleucine 193 and 198–200 contribute to the uracil site; that span reads GDA. Aspartate 199 is a binding site for 5-phospho-alpha-D-ribose 1-diphosphate.

The protein belongs to the UPRTase family. Mg(2+) is required as a cofactor.

It catalyses the reaction UMP + diphosphate = 5-phospho-alpha-D-ribose 1-diphosphate + uracil. The protein operates within pyrimidine metabolism; UMP biosynthesis via salvage pathway; UMP from uracil: step 1/1. Its activity is regulated as follows. Allosterically activated by GTP. Catalyzes the conversion of uracil and 5-phospho-alpha-D-ribose 1-diphosphate (PRPP) to UMP and diphosphate. In Pectobacterium atrosepticum (strain SCRI 1043 / ATCC BAA-672) (Erwinia carotovora subsp. atroseptica), this protein is Uracil phosphoribosyltransferase.